The sequence spans 488 residues: Eukaryotic translation initiation factor 3 subunit L (488 aa).

2 disordered regions span residues 1-34 and 427-449; these read MSLP…YREQ and SEGG…HGKE. A compositionally biased stretch (basic and acidic residues) spans 7-16; sequence QNRDAARRAP. A compositionally biased stretch (acidic residues) spans 17 to 27; sequence DDDDDAEEETM. Positions 256 to 450 constitute a PCI domain; the sequence is DAIRMFSHIL…RSRLRHGKEI (195 aa). Basic and acidic residues predominate over residues 431–440; the sequence is LLERRGDPQQ.

The protein belongs to the eIF-3 subunit L family. In terms of assembly, component of the eukaryotic translation initiation factor 3 (eIF-3) complex.

It is found in the cytoplasm. Component of the eukaryotic translation initiation factor 3 (eIF-3) complex, which is involved in protein synthesis of a specialized repertoire of mRNAs and, together with other initiation factors, stimulates binding of mRNA and methionyl-tRNAi to the 40S ribosome. The eIF-3 complex specifically targets and initiates translation of a subset of mRNAs involved in cell proliferation. This Phaeosphaeria nodorum (strain SN15 / ATCC MYA-4574 / FGSC 10173) (Glume blotch fungus) protein is Eukaryotic translation initiation factor 3 subunit L.